The primary structure comprises 547 residues: DNA ligase (547 aa).

Glutamate 244 serves as a coordination point for ATP. Lysine 246 acts as the N6-AMP-lysine intermediate in catalysis. Residues arginine 251, arginine 266, glutamate 295, phenylalanine 334, arginine 405, and lysine 411 each contribute to the ATP site.

The protein belongs to the ATP-dependent DNA ligase family. Mg(2+) serves as cofactor.

The catalysed reaction is ATP + (deoxyribonucleotide)n-3'-hydroxyl + 5'-phospho-(deoxyribonucleotide)m = (deoxyribonucleotide)n+m + AMP + diphosphate.. In terms of biological role, DNA ligase that seals nicks in double-stranded DNA during DNA replication, DNA recombination and DNA repair. The sequence is that of DNA ligase from Methanospirillum hungatei JF-1 (strain ATCC 27890 / DSM 864 / NBRC 100397 / JF-1).